Consider the following 411-residue polypeptide: Tyrosine--tRNA ligase (411 aa).

Tyrosine 33 contributes to the L-tyrosine binding site. The 'HIGH' region signature appears at proline 38 to asparagine 47. Positions 160 and 164 each coordinate L-tyrosine. The short motif at lysine 222–serine 226 is the 'KMSKS' region element. Lysine 225 lines the ATP pocket. An S4 RNA-binding domain is found at serine 347 to valine 411.

The protein belongs to the class-I aminoacyl-tRNA synthetase family. TyrS type 1 subfamily. Homodimer.

It is found in the cytoplasm. The enzyme catalyses tRNA(Tyr) + L-tyrosine + ATP = L-tyrosyl-tRNA(Tyr) + AMP + diphosphate + H(+). Functionally, catalyzes the attachment of tyrosine to tRNA(Tyr) in a two-step reaction: tyrosine is first activated by ATP to form Tyr-AMP and then transferred to the acceptor end of tRNA(Tyr). This is Tyrosine--tRNA ligase from Mycoplasmopsis agalactiae (strain NCTC 10123 / CIP 59.7 / PG2) (Mycoplasma agalactiae).